Reading from the N-terminus, the 209-residue chain is dITP/XTP pyrophosphatase (209 aa).

Residue 7–12 (TGNKGK) participates in substrate binding. The active-site Proton acceptor is D73. D73 is a Mg(2+) binding site. Substrate is bound by residues S74, 155 to 158 (FGYD), K178, and 183 to 184 (HR).

It belongs to the HAM1 NTPase family. In terms of assembly, homodimer. Mg(2+) is required as a cofactor.

The enzyme catalyses XTP + H2O = XMP + diphosphate + H(+). It carries out the reaction dITP + H2O = dIMP + diphosphate + H(+). The catalysed reaction is ITP + H2O = IMP + diphosphate + H(+). Pyrophosphatase that catalyzes the hydrolysis of nucleoside triphosphates to their monophosphate derivatives, with a high preference for the non-canonical purine nucleotides XTP (xanthosine triphosphate), dITP (deoxyinosine triphosphate) and ITP. Seems to function as a house-cleaning enzyme that removes non-canonical purine nucleotides from the nucleotide pool, thus preventing their incorporation into DNA/RNA and avoiding chromosomal lesions. The chain is dITP/XTP pyrophosphatase from Sulfurovum sp. (strain NBC37-1).